A 976-amino-acid polypeptide reads, in one-letter code: Apical junction component 1 homolog (976 aa).

The interval 21-49 (ATPGPASKCSPCERSVARPAEPAPFNKRH) is disordered. At Ser-52 the chain carries Phosphoserine. 3 disordered regions span residues 61–136 (GPAM…EPAY), 220–242 (PQFH…PTPS), and 264–294 (YAER…RGSF). Positions 98–113 (RAPPGLTPAPASPPVL) are enriched in pro residues. A compositionally biased stretch (basic and acidic residues) spans 116–134 (RGREAQRAARAEASPRREP). Ser-129 is modified (phosphoserine). At Arg-322 the chain carries Omega-N-methylarginine. The interval 412-443 (LQVVPPSDPDPLLASWHGGTGTSPPRLATDSR) is disordered. Residues Ser-468, Ser-509, and Ser-512 each carry the phosphoserine modification. Disordered regions lie at residues 539–574 (DLRA…SGRQ) and 614–660 (LDSR…ADED). 2 stretches are compositionally biased toward low complexity: residues 616 to 625 (SRPAGSGAPA) and 633 to 655 (PASA…SPEP). Arg-749 carries the asymmetric dimethylarginine; alternate modification. Arg-749 is subject to Omega-N-methylarginine; alternate. The segment at 855-888 (GSPARPPPARSREPDMETLILTPPPGTAGLDQDG) is disordered.

The protein resides in the apical cell membrane. It localises to the cell projection. Its subcellular location is the cilium. The protein localises to the cell junction. It is found in the adherens junction. Functionally, may be involved in the control of adherens junction integrity. In Homo sapiens (Human), this protein is Apical junction component 1 homolog.